The following is an 85-amino-acid chain: Protein MC005 (85 aa).

In terms of assembly, interacts with host IKBKG; this interaction prevents NF-kappa-B activation.

The protein localises to the host cytoplasm. In terms of biological role, plays a role in the inhibition of the host NF-kappa-B pathway by preventing ubiquitin binding-dependent regulation of host IKBKB activation by IKBKG/NEMO. This chain is Protein MC005 (MC005L), found in Molluscum contagiosum virus subtype 1 (MOCV).